Here is a 101-residue protein sequence, read N- to C-terminus: Large ribosomal subunit protein eL43 (101 aa).

The C4-type zinc-finger motif lies at 40–62; it reads CPSCRSLVRLQRIAFGIWKCPKC.

It belongs to the eukaryotic ribosomal protein eL43 family. The cofactor is Zn(2+).

The chain is Large ribosomal subunit protein eL43 from Pyrobaculum neutrophilum (strain DSM 2338 / JCM 9278 / NBRC 100436 / V24Sta) (Thermoproteus neutrophilus).